The chain runs to 400 residues: Enoyl-[acyl-carrier-protein] reductase [NADH] 2 (400 aa).

NAD(+) contacts are provided by residues 48–53, 75–76, 112–113, and 141–142; these read GASSGF, FE, DA, and LA. Tyrosine 228 provides a ligand contact to substrate. Tyrosine 238 serves as the catalytic Proton donor. NAD(+)-binding positions include lysine 247 and 276–278; that span reads LVT.

Belongs to the TER reductase family. As to quaternary structure, monomer.

It catalyses the reaction a 2,3-saturated acyl-[ACP] + NAD(+) = a (2E)-enoyl-[ACP] + NADH + H(+). It participates in lipid metabolism; fatty acid biosynthesis. Its function is as follows. Involved in the final reduction of the elongation cycle of fatty acid synthesis (FAS II). Catalyzes the reduction of a carbon-carbon double bond in an enoyl moiety that is covalently linked to an acyl carrier protein (ACP). The chain is Enoyl-[acyl-carrier-protein] reductase [NADH] 2 from Vibrio vulnificus (strain CMCP6).